Reading from the N-terminus, the 349-residue chain is Protein RecA (349 aa).

An ATP-binding site is contributed by G65–T72.

It belongs to the RecA family.

The protein localises to the cytoplasm. Its function is as follows. Can catalyze the hydrolysis of ATP in the presence of single-stranded DNA, the ATP-dependent uptake of single-stranded DNA by duplex DNA, and the ATP-dependent hybridization of homologous single-stranded DNAs. It interacts with LexA causing its activation and leading to its autocatalytic cleavage. This is Protein RecA from Vibrio vulnificus (strain CMCP6).